The sequence spans 269 residues: Phosphonoacetaldehyde hydrolase (269 aa).

The active-site Nucleophile is Asp10. Mg(2+) contacts are provided by Asp10 and Ala12. Lys52 functions as the Schiff-base intermediate with substrate in the catalytic mechanism. Asp186 contacts Mg(2+).

Belongs to the HAD-like hydrolase superfamily. PhnX family. As to quaternary structure, homodimer. The cofactor is Mg(2+).

The enzyme catalyses phosphonoacetaldehyde + H2O = acetaldehyde + phosphate + H(+). In terms of biological role, involved in phosphonate degradation. This Salmonella agona (strain SL483) protein is Phosphonoacetaldehyde hydrolase.